The following is a 583-amino-acid chain: Isocitrate dehydrogenase kinase/phosphatase (583 aa).

ATP is bound by residues 315–321 (APGIRGM) and Lys336. The active site involves Asp371.

The protein belongs to the AceK family.

It is found in the cytoplasm. It carries out the reaction L-seryl-[isocitrate dehydrogenase] + ATP = O-phospho-L-seryl-[isocitrate dehydrogenase] + ADP + H(+). Functionally, bifunctional enzyme which can phosphorylate or dephosphorylate isocitrate dehydrogenase (IDH) on a specific serine residue. This is a regulatory mechanism which enables bacteria to bypass the Krebs cycle via the glyoxylate shunt in response to the source of carbon. When bacteria are grown on glucose, IDH is fully active and unphosphorylated, but when grown on acetate or ethanol, the activity of IDH declines drastically concomitant with its phosphorylation. This Salmonella paratyphi C (strain RKS4594) protein is Isocitrate dehydrogenase kinase/phosphatase.